A 328-amino-acid polypeptide reads, in one-letter code: tRNA uridine(34) hydroxylase (328 aa).

The 95-residue stretch at 130–224 folds into the Rhodanese domain; that stretch reads LDEDTVVLDT…YGKDPEVQGE (95 aa). The active-site Cysteine persulfide intermediate is Cys184.

Belongs to the TrhO family.

The catalysed reaction is uridine(34) in tRNA + AH2 + O2 = 5-hydroxyuridine(34) in tRNA + A + H2O. Functionally, catalyzes oxygen-dependent 5-hydroxyuridine (ho5U) modification at position 34 in tRNAs. This is tRNA uridine(34) hydroxylase from Streptococcus pyogenes serotype M28 (strain MGAS6180).